Reading from the N-terminus, the 375-residue chain is tRNA-specific 2-thiouridylase MnmA (375 aa).

Residues 8-15 (GLSGGVDS) and Met-34 contribute to the ATP site. The tract at residues 104 to 106 (NPD) is interaction with target base in tRNA. Cys-109 serves as the catalytic Nucleophile. Cys-109 and Cys-208 form a disulfide bridge. Gly-134 lines the ATP pocket. An interaction with tRNA region spans residues 158–160 (KDQ). Cys-208 acts as the Cysteine persulfide intermediate in catalysis. Residues 321–322 (RY) form an interaction with tRNA region.

This sequence belongs to the MnmA/TRMU family.

It is found in the cytoplasm. The catalysed reaction is S-sulfanyl-L-cysteinyl-[protein] + uridine(34) in tRNA + AH2 + ATP = 2-thiouridine(34) in tRNA + L-cysteinyl-[protein] + A + AMP + diphosphate + H(+). Its function is as follows. Catalyzes the 2-thiolation of uridine at the wobble position (U34) of tRNA, leading to the formation of s(2)U34. The chain is tRNA-specific 2-thiouridylase MnmA from Mycoplasma capricolum subsp. capricolum (strain California kid / ATCC 27343 / NCTC 10154).